We begin with the raw amino-acid sequence, 69 residues long: Omega-oxotoxin-Ol1a (69 aa).

The Oxytoxin-type inhibitor cystine knot (ICK) domain maps to 1-68 (DWECLPLHSS…GKINTCDKYK (68 aa)). Disulfide bonds link cysteine 4/cysteine 18, cysteine 11/cysteine 23, cysteine 15/cysteine 64, cysteine 17/cysteine 52, and cysteine 25/cysteine 50. Asparagine 69 carries the asparagine amide modification.

The protein belongs to the spiderine family. Spiderine subfamily. As to expression, expressed by the venom gland.

It is found in the secreted. In terms of biological role, weak blocker of vertebrate P/Q-, N- and L-type voltage-gated calcium channels (Cav1 and Cav2). Is both paralytic and lethal when injected into lepidopteran larvae. Is not toxic to mice. The polypeptide is Omega-oxotoxin-Ol1a (Oxyopes lineatus (Lynx spider)).